The primary structure comprises 86 residues: Small ribosomal subunit protein bS20 (86 aa).

Positions 1 to 11 (MANIKQQKKRN) are enriched in basic residues. The tract at residues 1 to 21 (MANIKQQKKRNKTNEKRRLQN) is disordered.

It belongs to the bacterial ribosomal protein bS20 family.

Functionally, binds directly to 16S ribosomal RNA. This chain is Small ribosomal subunit protein bS20, found in Onion yellows phytoplasma (strain OY-M).